The chain runs to 464 residues: MSYFTREKHELTAATPWEKTVAKMLSPFNRFMNSANGSGILLVFLTIVALVFANTSCREWYERVLNQQLLVQMGSFKIDMTIHYWINDALMTLFFLMVGLEIKYEMKVGRLASLKRAVLPIFAALGGMIVPALIYFSFNSQGETVSGWGIPMATDIAFAIAILLLLKGKVSPSLTAVLVALAIVDDLGAVIVIAIFYTDNLAWSPLIAAFLCFAVLLLLNRGGIRALWAYIAIGSLMWVFMLFSGVHATVAGVLTALATPMNAVYSPTEFSTQARQLLDEFDAHPDSKTQVAHSRELNDLLQQLSTGIQKTQTPLQRLEHILNTPVYFLIVPLFVLFNAGVHVELNNLNALLHSPVLKGVFFGLVFGKLIGVVSAIMICVKLKIAALPADATFKQVLGIGMLAGIGFTMSIFVSELAFSGQAQHLAEAKITILAASLTAATLGYCWLRFITGAAKAETGTSVSQ.

A run of 12 helical transmembrane segments spans residues 37 to 57 (GSGILLVFLTIVALVFANTSC), 82 to 102 (IHYWINDALMTLFFLMVGLEI), 118 to 138 (VLPIFAALGGMIVPALIYFSF), 145 to 165 (VSGWGIPMATDIAFAIAILLL), 176 to 196 (AVLVALAIVDDLGAVIVIAIF), 200 to 220 (NLAWSPLIAAFLCFAVLLLLN), 226 to 246 (ALWAYIAIGSLMWVFMLFSGV), 248 to 268 (ATVAGVLTALATPMNAVYSPT), 321 to 341 (ILNTPVYFLIVPLFVLFNAGV), 360 to 380 (VFFGLVFGKLIGVVSAIMICV), 396 to 416 (VLGIGMLAGIGFTMSIFVSEL), and 430 to 450 (ITILAASLTAATLGYCWLRFI).

Belongs to the NhaA Na(+)/H(+) (TC 2.A.33) antiporter family.

The protein localises to the cell inner membrane. The catalysed reaction is Na(+)(in) + 2 H(+)(out) = Na(+)(out) + 2 H(+)(in). Functionally, na(+)/H(+) antiporter that extrudes sodium in exchange for external protons. This chain is Na(+)/H(+) antiporter NhaA, found in Dichelobacter nodosus (strain VCS1703A).